A 334-amino-acid chain; its full sequence is UstYa family oxidase aprY (334 aa).

The chain crosses the membrane as a helical span at residues 55–75 (IWILLTITNLIILGITVSMIV). N112 is a glycosylation site (N-linked (GlcNAc...) asparagine). Positions 185–189 (HQIHC) match the HXXHC 1 motif. Residue N214 is glycosylated (N-linked (GlcNAc...) asparagine). The HXXHC 2 motif lies at 223-227 (HLGHC). Residues 306-318 (SELGEKLGKHQKQ) show a composition bias toward basic and acidic residues. Residues 306-334 (SELGEKLGKHQKQEGVLGQAGHQHTKRHE) form a disordered region.

It belongs to the ustYa family.

It localises to the membrane. Its pathway is secondary metabolite biosynthesis. Functionally, ustYa family oxidase; part of the gene cluster that mediates the biosynthesis of the asperipin-2a, a bicyclic peptide that possesses two macrocyclic ether rings consisting of 14- and 17-membered paracyclophans. Within the pathway, aprY is responsible for the synthesis of the bicyclic structure of asperipin-2a. The pathway starts with the processing of the precursor aprA by kexin proteases to produce 11 identical copies of the hexapeptide Phe-Tyr-Tyr-Thr-Gly-Tyr. Macrocyclization of asperipin-2a may accompany an alpha-hydroxylation-dehydration sequence to give an imine, which is readily hydrolyzed to yield putative ketone intermediate. The reductase aprR may be required for the final reduction to yield asperipin-2a. This is UstYa family oxidase aprY from Aspergillus flavus (strain ATCC 200026 / FGSC A1120 / IAM 13836 / NRRL 3357 / JCM 12722 / SRRC 167).